A 122-amino-acid polypeptide reads, in one-letter code: Large ribosomal subunit protein uL18 (122 aa).

Basic residues predominate over residues 1-20; that stretch reads MLKKVSKNTNRQGRHQRVRN. The segment at 1-22 is disordered; it reads MLKKVSKNTNRQGRHQRVRNKI.

It belongs to the universal ribosomal protein uL18 family. In terms of assembly, part of the 50S ribosomal subunit; part of the 5S rRNA/L5/L18/L25 subcomplex. Contacts the 5S and 23S rRNAs.

Functionally, this is one of the proteins that bind and probably mediate the attachment of the 5S RNA into the large ribosomal subunit, where it forms part of the central protuberance. The chain is Large ribosomal subunit protein uL18 from Alkaliphilus metalliredigens (strain QYMF).